The chain runs to 476 residues: MRVLHVCSELFPLLKTGGLADVVGALPAAQIAEGADVRVMLPGFPDLRRGIPDTVLVREIDTFAGRVSLRYGHYQGIGIYLIDAPGLYDRAGSPYHDQSLHAYADNYRRFALLGWMACELACGLDGYWRPEVVHAHDWHAGLACAYLAARGRPARSVFTVHNLAYQGLFSGHHLAEIQLPAAFFQMYGLEFYGQISYLKAGLFFADHVTTVSPTYAKEITQPAFGYGMEGLLQERASQGRLTGILNGVDSDIWDPQTDTLLHARYDAEDLQKKAVNKTHLQTTMGLEVTEKKPIFAVVSRLTEQKGLDLVLEALPDLLQLGGQLAVLGAGDAILQEAFLAAAADYSGQVGVQIGYHEAFSHRIIAGADVILVPSRFEPCGLTQLYGLKYGTLPLVRHTGGLADTVVDCALENLADGSASGFVFDECDAQALVRAIRRAFVLWSRPKHWRHVQRHAMGLDFGWQVAAADYLSLYRRL.

Position 15 (lysine 15) interacts with ADP-alpha-D-glucose.

It belongs to the glycosyltransferase 1 family. Bacterial/plant glycogen synthase subfamily.

The enzyme catalyses [(1-&gt;4)-alpha-D-glucosyl](n) + ADP-alpha-D-glucose = [(1-&gt;4)-alpha-D-glucosyl](n+1) + ADP + H(+). Its pathway is glycan biosynthesis; glycogen biosynthesis. In terms of biological role, synthesizes alpha-1,4-glucan chains using ADP-glucose. In Yersinia enterocolitica serotype O:8 / biotype 1B (strain NCTC 13174 / 8081), this protein is Glycogen synthase.